The chain runs to 199 residues: Transgelin-3 (199 aa).

The Calponin-homology (CH) domain occupies 24-136 (ADLENKLVDW…RTLMALGSVA (113 aa)). Serine 163 carries the phosphoserine modification. A Calponin-like repeat occupies 174–199 (IGLQMGSNKGASQAGMTGYGMPRQIM). Over residues 176–188 (LQMGSNKGASQAG) the composition is skewed to polar residues. Residues 176 to 199 (LQMGSNKGASQAGMTGYGMPRQIM) form a disordered region.

It belongs to the calponin family.

This is Transgelin-3 (TAGLN3) from Pongo abelii (Sumatran orangutan).